The chain runs to 319 residues: MKRIGVLTSGGDSPGMNAAVRAVVRKAIYHDVEVYGIYNGYAGLISGKIEKLELGSVGDIIHRGGTKLYTARCPEFKTVEGREKGIANLKKLGIEGLVVIGGDGSYMGAKKLTEHGFPCVGVPGTIDNDIPGTDFTIGFDTALNTVIDAIDKIRDTATSHERTYVIEVMGRHAGDIALWAGLAGGAESILIPEADYDMHEIIARLKRGHERGKKHSIIIVAEGVGSGVEFGKRIEEETNLETRVSVLGHIQRGGSPSAADRVLASRLGAYAVELLLEGKGGRCVGIQNNKLVDHDIIEILETKHTVEQNMYQLSKELSI.

G11 lines the ATP pocket. R21–R25 serves as a coordination point for ADP. Residues R72–C73 and G102–S105 contribute to the ATP site. D103 is a Mg(2+) binding site. T125 to D127 lines the substrate pocket. D127 functions as the Proton acceptor in the catalytic mechanism. An ADP-binding site is contributed by R154. Residues R162 and M169–R171 contribute to the substrate site. Residues G185–E187, R211, and K213–H215 each bind ADP. Residues E222, R243, and H249–R252 contribute to the substrate site.

It belongs to the phosphofructokinase type A (PFKA) family. ATP-dependent PFK group I subfamily. Prokaryotic clade 'B1' sub-subfamily. As to quaternary structure, homotetramer. Component of a possible RNA degradosome complex composed of rny, rnjA, rnjB, pnp, pfkA and eno (although rnjA and rnjB's presence is unclear). Specifically interacts with RNase Y (rny, PubMed:21803996) and enolase (eno, PubMed:22198292). Interacts with BrxC. The cofactor is Mg(2+).

It is found in the cytoplasm. The catalysed reaction is beta-D-fructose 6-phosphate + ATP = beta-D-fructose 1,6-bisphosphate + ADP + H(+). The protein operates within carbohydrate degradation; glycolysis; D-glyceraldehyde 3-phosphate and glycerone phosphate from D-glucose: step 3/4. With respect to regulation, allosterically activated by ADP and other diphosphonucleosides, and allosterically inhibited by phosphoenolpyruvate. Functionally, catalyzes the phosphorylation of D-fructose 6-phosphate to fructose 1,6-bisphosphate by ATP, the first committing step of glycolysis. The chain is ATP-dependent 6-phosphofructokinase from Bacillus subtilis (strain 168).